The following is a 372-amino-acid chain: Cell division protein FtsZ 1 (372 aa).

GTP is bound by residues 51 to 55, 138 to 140, Glu-169, Arg-173, and Asp-216; these read GAGCN and GTG. The interval 352 to 372 is disordered; the sequence is EETPAPSEEETTPVKIDIPEL.

Belongs to the FtsZ family. In terms of assembly, homodimer. Polymerizes to form a dynamic ring structure in a strictly GTP-dependent manner. Interacts directly with several other division proteins.

The protein localises to the cytoplasm. Its function is as follows. Essential cell division protein that forms a contractile ring structure (Z ring) at the future cell division site. The regulation of the ring assembly controls the timing and the location of cell division. One of the functions of the FtsZ ring is to recruit other cell division proteins to the septum to produce a new cell wall between the dividing cells. Binds GTP and shows GTPase activity. The protein is Cell division protein FtsZ 1 of Pyrococcus horikoshii (strain ATCC 700860 / DSM 12428 / JCM 9974 / NBRC 100139 / OT-3).